Reading from the N-terminus, the 332-residue chain is Fructose-1,6-bisphosphatase class 1 (332 aa).

Positions 89, 110, 112, and 113 each coordinate Mg(2+). Residues 113–116 (DGSS), Asn206, Tyr239, 257–259 (YLY), and Lys269 each bind substrate. Glu275 is a binding site for Mg(2+).

It belongs to the FBPase class 1 family. Homotetramer. The cofactor is Mg(2+).

Its subcellular location is the cytoplasm. It catalyses the reaction beta-D-fructose 1,6-bisphosphate + H2O = beta-D-fructose 6-phosphate + phosphate. It functions in the pathway carbohydrate biosynthesis; gluconeogenesis. This is Fructose-1,6-bisphosphatase class 1 from Citrobacter koseri (strain ATCC BAA-895 / CDC 4225-83 / SGSC4696).